Reading from the N-terminus, the 265-residue chain is Protein Rv2993c (265 aa).

A divalent metal cation-binding residues include E114, E116, and D145.

It in the C-terminal section; belongs to the FAH family. Requires a divalent metal cation as cofactor.

This is Protein Rv2993c from Mycobacterium tuberculosis (strain ATCC 25618 / H37Rv).